The primary structure comprises 220 residues: Iron-sulfur cluster repair protein YtfE (220 aa).

This sequence belongs to the RIC family. YtfE subfamily. Homodimer.

It localises to the cytoplasm. Functionally, di-iron-containing protein involved in the repair of iron-sulfur clusters damaged by oxidative and nitrosative stress conditions. The protein is Iron-sulfur cluster repair protein YtfE of Salmonella choleraesuis (strain SC-B67).